We begin with the raw amino-acid sequence, 205 residues long: High frequency lysogenization protein HflD homolog (205 aa).

Belongs to the HflD family.

It localises to the cytoplasm. It is found in the cell inner membrane. The polypeptide is High frequency lysogenization protein HflD homolog (Shewanella sp. (strain MR-7)).